The following is a 493-amino-acid chain: Neisserial heparin binding antigen (493 aa).

Residues 1–22 (MKEMMMFKRSVIAMACIFALSA) form the signal peptide. The N-palmitoyl cysteine moiety is linked to residue Cys23. Cys23 is lipidated: S-diacylglycerol cysteine. The disordered stretch occupies residues 27-206 (GGGSPDVKSA…NPAPANGGSN (180 aa)). Residues 48–58 (SEKETEAKEDA) show a composition bias toward basic and acidic residues. Residues 59 to 75 (PQAGSQGQGAPSAQGSQ) are compositionally biased toward low complexity. 2 stretches are compositionally biased toward polar residues: residues 106–123 (DMPQNAAGTDSSTPNHTP) and 132–147 (MENQATDAGESSQPAN). Residues 165–188 (AGGQNAGNTAAQGANQAGNNQAAG) show a composition bias toward low complexity. Residues 301–311 (RFRRSARSRRS) carry the Arg-rich motif motif.

The protein belongs to the NHBA family. The C-terminal beta-barrel forms a monomer. Cleaved in vivo by the Neisserial phase-variable autotransporter/serine protease NalP to give 2 fragments. The N-terminus remains in the cell outer membrane while the C-terminus (beginning on Ser-298) is soluble; this soluble fragment is called C2. Cleaved in vitro by human lactoferrin (LTF, between Arg-310 and Ser-311), this fragment is called C1. Recombinant and cell surface protein is cleaved by human saliva kallikrein (KLK1) between Ser-308 and Arg-309; in saliva kallikrein is more active on NHBA than lactoferrin. Human plasma kallikrein (KLKB1) cleaves in a similar manner to KLK1.

It localises to the cell outer membrane. Its function is as follows. A major human immunogenic protein detected in patients recovering from meningitidis, where it induces bactericidal antibodies. Binds human cells, heparin and heparan sulfate proteoglycan in vitro via the Arg-rich motif. Heparin-binding to this protein protects bacteria against killing by bactericidal antibodies (serum killing). The bacteria binds a number of human extracellular sialyated and/or sulfated glycans via this protein, including chondroitin sulfate, heparin and ganglioside GT3. Whole protein binds DNA. Plays a role in extracellular-DNA (eDNA) mediated biofilm formation. In some strains (including cc32 strain H44/76 but not cc11 strain B16B6) eDNA stimulates biofilm formation. When NHBA is not processed by NalP, biofilm formation increases. This is probably because the number of positively charged, NHBA- and IgA-derived DNA-binding peptides on the cell surface rises, resulting in increased DNA-binding peptides and increased biofilm formation. The sequence is that of Neisserial heparin binding antigen from Neisseria meningitidis serogroup B / serotype 15 (strain H44/76).